A 147-amino-acid chain; its full sequence is Large ribosomal subunit protein uL11 (147 aa).

This sequence belongs to the universal ribosomal protein uL11 family. As to quaternary structure, part of the ribosomal stalk of the 50S ribosomal subunit. Interacts with L10 and the large rRNA to form the base of the stalk. L10 forms an elongated spine to which L12 dimers bind in a sequential fashion forming a multimeric L10(L12)X complex. In terms of processing, one or more lysine residues are methylated.

In terms of biological role, forms part of the ribosomal stalk which helps the ribosome interact with GTP-bound translation factors. In Sorangium cellulosum (strain So ce56) (Polyangium cellulosum (strain So ce56)), this protein is Large ribosomal subunit protein uL11.